Reading from the N-terminus, the 521-residue chain is Glutamate--tRNA ligase (521 aa).

The short motif at 30 to 40 (PSPTGYLHVGG) is the 'HIGH' region element. A 'KMSKS' region motif is present at residues 277-281 (KLSKR). Lys-280 is an ATP binding site.

Belongs to the class-I aminoacyl-tRNA synthetase family. Glutamate--tRNA ligase type 1 subfamily. Monomer.

The protein localises to the cytoplasm. It catalyses the reaction tRNA(Glu) + L-glutamate + ATP = L-glutamyl-tRNA(Glu) + AMP + diphosphate. In terms of biological role, catalyzes the attachment of glutamate to tRNA(Glu) in a two-step reaction: glutamate is first activated by ATP to form Glu-AMP and then transferred to the acceptor end of tRNA(Glu). The chain is Glutamate--tRNA ligase from Chlorobium phaeovibrioides (strain DSM 265 / 1930) (Prosthecochloris vibrioformis (strain DSM 265)).